The sequence spans 511 residues: Maturase K (511 aa).

This sequence belongs to the intron maturase 2 family. MatK subfamily.

The protein localises to the plastid. Its subcellular location is the chloroplast. Functionally, usually encoded in the trnK tRNA gene intron. Probably assists in splicing its own and other chloroplast group II introns. The sequence is that of Maturase K from Poa pratensis (Kentucky bluegrass).